The sequence spans 408 residues: Phosphopentomutase (408 aa).

6 residues coordinate Mn(2+): Asp10, Asp307, His312, Asp348, His349, and His360.

The protein belongs to the phosphopentomutase family. It depends on Mn(2+) as a cofactor.

The protein resides in the cytoplasm. The catalysed reaction is 2-deoxy-alpha-D-ribose 1-phosphate = 2-deoxy-D-ribose 5-phosphate. It carries out the reaction alpha-D-ribose 1-phosphate = D-ribose 5-phosphate. Its pathway is carbohydrate degradation; 2-deoxy-D-ribose 1-phosphate degradation; D-glyceraldehyde 3-phosphate and acetaldehyde from 2-deoxy-alpha-D-ribose 1-phosphate: step 1/2. Functionally, isomerase that catalyzes the conversion of deoxy-ribose 1-phosphate (dRib-1-P) and ribose 1-phosphate (Rib-1-P) to deoxy-ribose 5-phosphate (dRib-5-P) and ribose 5-phosphate (Rib-5-P), respectively. This Proteus mirabilis (strain HI4320) protein is Phosphopentomutase.